Here is a 134-residue protein sequence, read N- to C-terminus: Profilin-2 (134 aa).

Residues Cys13 and Cys118 are joined by a disulfide bond. The Involved in PIP2 interaction motif lies at 84–100 (AVIRGKKGSGGITIKKT). Thr114 is modified (phosphothreonine).

The protein belongs to the profilin family. In terms of assembly, occurs in many kinds of cells as a complex with monomeric actin in a 1:1 ratio. Phosphorylated by MAP kinases.

Its subcellular location is the cytoplasm. It is found in the cytoskeleton. Binds to actin and affects the structure of the cytoskeleton. At high concentrations, profilin prevents the polymerization of actin, whereas it enhances it at low concentrations. In Olea europaea (Common olive), this protein is Profilin-2.